The chain runs to 414 residues: Glutamyl-tRNA reductase (414 aa).

Substrate is bound by residues 49–52, serine 108, 113–115, and glutamine 119; these read TCNR and EPQ. Cysteine 50 functions as the Nucleophile in the catalytic mechanism. 188–193 is a binding site for NADP(+); sequence GAGQTG.

Belongs to the glutamyl-tRNA reductase family. In terms of assembly, homodimer.

It carries out the reaction (S)-4-amino-5-oxopentanoate + tRNA(Glu) + NADP(+) = L-glutamyl-tRNA(Glu) + NADPH + H(+). Its pathway is porphyrin-containing compound metabolism; protoporphyrin-IX biosynthesis; 5-aminolevulinate from L-glutamyl-tRNA(Glu): step 1/2. Its function is as follows. Catalyzes the NADPH-dependent reduction of glutamyl-tRNA(Glu) to glutamate 1-semialdehyde (GSA). The protein is Glutamyl-tRNA reductase of Francisella tularensis subsp. tularensis (strain WY96-3418).